We begin with the raw amino-acid sequence, 706 residues long: Translation initiation factor IF-2 (706 aa).

The span at 55-81 shows a compositional bias: basic and acidic residues; that stretch reads AKETANEKPAEQKKQSSNKINDRKKND. Positions 55-127 are disordered; that stretch reads AKETANEKPA…KPKKELPEKI (73 aa). Residues 82-98 are compositionally biased toward low complexity; that stretch reads VQNNQFNKNKKNNNQNK. In terms of domain architecture, tr-type G spans 207 to 376; the sequence is VRPPVVTIMG…LLVSEVGELK (170 aa). Residues 216–223 are G1; that stretch reads GHVDHGKT. 216–223 lines the GTP pocket; it reads GHVDHGKT. Positions 241-245 are G2; the sequence is GITQH. Residues 262-265 form a G3 region; that stretch reads DTPG. GTP-binding positions include 262 to 266 and 316 to 319; these read DTPGH and NKID. The interval 316 to 319 is G4; that stretch reads NKID. The interval 352 to 354 is G5; the sequence is SAK.

This sequence belongs to the TRAFAC class translation factor GTPase superfamily. Classic translation factor GTPase family. IF-2 subfamily.

The protein resides in the cytoplasm. Functionally, one of the essential components for the initiation of protein synthesis. Protects formylmethionyl-tRNA from spontaneous hydrolysis and promotes its binding to the 30S ribosomal subunits. Also involved in the hydrolysis of GTP during the formation of the 70S ribosomal complex. This chain is Translation initiation factor IF-2, found in Bacillus pumilus (strain SAFR-032).